A 338-amino-acid polypeptide reads, in one-letter code: GTPase Obg (338 aa).

Positions 1–159 (MSFIDEVKIN…RWIRMELKLM (159 aa)) constitute an Obg domain. Residues 58 to 79 (DLRQHPHQKAGRGKNGMGSDRH) form a disordered region. An OBG-type G domain is found at 160-331 (ADVGLLGMPS…LLDDIAFNLW (172 aa)). GTP-binding positions include 166–173 (GMPSVGKS), 191–195 (FTTLK), 213–216 (DIPG), 283–286 (NKID), and 312–314 (SAA). Mg(2+)-binding residues include Ser-173 and Thr-193.

This sequence belongs to the TRAFAC class OBG-HflX-like GTPase superfamily. OBG GTPase family. As to quaternary structure, monomer. The cofactor is Mg(2+).

Its subcellular location is the cytoplasm. Its function is as follows. An essential GTPase which binds GTP, GDP and possibly (p)ppGpp with moderate affinity, with high nucleotide exchange rates and a fairly low GTP hydrolysis rate. Plays a role in control of the cell cycle, stress response, ribosome biogenesis and in those bacteria that undergo differentiation, in morphogenesis control. The sequence is that of GTPase Obg from Citrifermentans bemidjiense (strain ATCC BAA-1014 / DSM 16622 / JCM 12645 / Bem) (Geobacter bemidjiensis).